The following is a 108-amino-acid chain: uncharacterized protein (108 aa).

The chain crosses the membrane as a helical span at residues 25–45 (VILKSFLLISSWVILVLLLVI).

The protein localises to the membrane. This is an uncharacterized protein from Saccharomyces cerevisiae (strain ATCC 204508 / S288c) (Baker's yeast).